The following is a 530-amino-acid chain: Phosphoenolpyruvate carboxykinase (ATP) (530 aa).

Arg-60, Tyr-195, and Lys-201 together coordinate substrate. Residues Lys-201, His-221, and 237–245 each bind ATP; that span reads GLSGTGKTT. 2 residues coordinate Mn(2+): Lys-201 and His-221. Residue Asp-258 coordinates Mn(2+). Residues Glu-286, Arg-324, 443–444, and Ser-449 each bind ATP; that span reads RI. Arg-324 is a binding site for substrate.

The protein belongs to the phosphoenolpyruvate carboxykinase (ATP) family. It depends on Mn(2+) as a cofactor.

Its subcellular location is the cytoplasm. The catalysed reaction is oxaloacetate + ATP = phosphoenolpyruvate + ADP + CO2. It participates in carbohydrate biosynthesis; gluconeogenesis. Its function is as follows. Involved in the gluconeogenesis. Catalyzes the conversion of oxaloacetate (OAA) to phosphoenolpyruvate (PEP) through direct phosphoryl transfer between the nucleoside triphosphate and OAA. The sequence is that of Phosphoenolpyruvate carboxykinase (ATP) from Pelobacter propionicus (strain DSM 2379 / NBRC 103807 / OttBd1).